A 233-amino-acid polypeptide reads, in one-letter code: Glucosamine-6-phosphate deaminase (233 aa).

The Proton acceptor; for enolization step role is filled by Asp62. Residue Asn128 is the For ring-opening step of the active site. Catalysis depends on His130, which acts as the Proton acceptor; for ring-opening step. The active-site For ring-opening step is the Glu135.

Belongs to the glucosamine/galactosamine-6-phosphate isomerase family. NagB subfamily.

It catalyses the reaction alpha-D-glucosamine 6-phosphate + H2O = beta-D-fructose 6-phosphate + NH4(+). It participates in amino-sugar metabolism; N-acetylneuraminate degradation; D-fructose 6-phosphate from N-acetylneuraminate: step 5/5. Its function is as follows. Catalyzes the reversible isomerization-deamination of glucosamine 6-phosphate (GlcN6P) to form fructose 6-phosphate (Fru6P) and ammonium ion. This chain is Glucosamine-6-phosphate deaminase, found in Streptococcus agalactiae serotype Ia (strain ATCC 27591 / A909 / CDC SS700).